Reading from the N-terminus, the 216-residue chain is Cytochrome c biogenesis ATP-binding export protein CcmA (216 aa).

The region spanning Leu18 to Ala216 is the ABC transporter domain. Gly50 to Thr57 is a binding site for ATP.

This sequence belongs to the ABC transporter superfamily. CcmA exporter (TC 3.A.1.107) family. As to quaternary structure, the complex is composed of two ATP-binding proteins (CcmA) and two transmembrane proteins (CcmB).

It is found in the cell inner membrane. The catalysed reaction is heme b(in) + ATP + H2O = heme b(out) + ADP + phosphate + H(+). Part of the ABC transporter complex CcmAB involved in the biogenesis of c-type cytochromes; once thought to export heme, this seems not to be the case, but its exact role is uncertain. Responsible for energy coupling to the transport system. The sequence is that of Cytochrome c biogenesis ATP-binding export protein CcmA from Nitrosococcus oceani (strain ATCC 19707 / BCRC 17464 / JCM 30415 / NCIMB 11848 / C-107).